The chain runs to 261 residues: Guanine nucleotide exchange factor BopE (261 aa).

The protein belongs to the GEF (guanine exchange factor) SopE family. In terms of assembly, monomer. Interacts with human CDC42.

The protein localises to the secreted. In terms of biological role, activator for both CDC42 and RAC1 by directly interacting with these Rho GTPases and acting as a guanine nucleotide exchange factor (GEF). This activation results in actin cytoskeleton rearrangements and stimulates membrane ruffling, thus promoting bacterial entry into non-phagocytic cells. This is Guanine nucleotide exchange factor BopE (bopE) from Burkholderia mallei (strain NCTC 10247).